A 255-amino-acid chain; its full sequence is Zinc D-Ala-D-Ala carboxypeptidase (255 aa).

Positions 1-42 are cleaved as a signal peptide; the sequence is MRPRPIRLLLTALVGAGLAFAPVSAVAAPTATASASADVGAL. A Blocked amino end (Asp) modification is found at Asp43. Disulfide bonds link Cys45–Cys123 and Cys136–Cys184. Substrate is bound at residue Arg180. Zn(2+) is bound at residue His196. Cys212 and Cys253 are oxidised to a cystine. His234 (proton donor) is an active-site residue. Zn(2+)-binding residues include His237 and His239.

Belongs to the peptidase M15 family. Requires Zn(2+) as cofactor. In terms of processing, the N-terminus is partially blocked as a result of the cyclization of the first two amino acids into anhydroaspartylglycine imide.

The protein resides in the secreted. The enzyme catalyses Cleavage of the bond: (Ac)2-L-lysyl-D-alanyl-|-D-alanine.. Its function is as follows. This enzyme catalyzes carboxypeptidation and transpeptidation reactions involved in bacterial cell wall metabolism. It effectively catalyzes the transfer of the N-alpha, N-epsilon-diacetyl-L-lysyl-D-alanyl electrophilic group of the standard tripeptide substrate N-alpha,N-epsilon-diacetyl-L-lysyl-D-alanyl-D-alanine to water. It also performs a weak beta-lactamase activity, hydrolyzing penicillin into penicilloate at a very low rate. The protein is Zinc D-Ala-D-Ala carboxypeptidase of Streptomyces albus G.